Reading from the N-terminus, the 289-residue chain is Acetyl-coenzyme A carboxylase carboxyl transferase subunit beta (289 aa).

Residues 23–289 (HWIKCPSCSA…YDENPCLLHL (267 aa)) form the CoA carboxyltransferase N-terminal domain. Zn(2+) contacts are provided by C27, C30, C46, and C49. A C4-type zinc finger spans residues 27–49 (CPSCSALMYYKEVIAQHHVCPKC).

It belongs to the AccD/PCCB family. In terms of assembly, acetyl-CoA carboxylase is a heterohexamer composed of biotin carboxyl carrier protein (AccB), biotin carboxylase (AccC) and two subunits each of ACCase subunit alpha (AccA) and ACCase subunit beta (AccD). It depends on Zn(2+) as a cofactor.

The protein localises to the cytoplasm. It catalyses the reaction N(6)-carboxybiotinyl-L-lysyl-[protein] + acetyl-CoA = N(6)-biotinyl-L-lysyl-[protein] + malonyl-CoA. The protein operates within lipid metabolism; malonyl-CoA biosynthesis; malonyl-CoA from acetyl-CoA: step 1/1. Its function is as follows. Component of the acetyl coenzyme A carboxylase (ACC) complex. Biotin carboxylase (BC) catalyzes the carboxylation of biotin on its carrier protein (BCCP) and then the CO(2) group is transferred by the transcarboxylase to acetyl-CoA to form malonyl-CoA. This chain is Acetyl-coenzyme A carboxylase carboxyl transferase subunit beta, found in Wolinella succinogenes (strain ATCC 29543 / DSM 1740 / CCUG 13145 / JCM 31913 / LMG 7466 / NCTC 11488 / FDC 602W) (Vibrio succinogenes).